The chain runs to 437 residues: 3-ketoacyl-CoA thiolase (437 aa).

The active-site Acyl-thioester intermediate is the cysteine 99. Catalysis depends on proton acceptor residues histidine 392 and cysteine 422.

The protein belongs to the thiolase-like superfamily. Thiolase family. In terms of assembly, heterotetramer of two alpha chains (FadJ) and two beta chains (FadI).

Its subcellular location is the cytoplasm. It carries out the reaction an acyl-CoA + acetyl-CoA = a 3-oxoacyl-CoA + CoA. Its pathway is lipid metabolism; fatty acid beta-oxidation. Its function is as follows. Catalyzes the final step of fatty acid oxidation in which acetyl-CoA is released and the CoA ester of a fatty acid two carbons shorter is formed. This Pectobacterium carotovorum subsp. carotovorum (strain PC1) protein is 3-ketoacyl-CoA thiolase.